The primary structure comprises 189 residues: Large ribosomal subunit protein eL19A (189 aa).

Lys21 is covalently cross-linked (Glycyl lysine isopeptide (Lys-Gly) (interchain with G-Cter in ubiquitin)). 2 positions are modified to phosphoserine: Ser30 and Ser37. Residues Lys53 and Lys60 each participate in a glycyl lysine isopeptide (Lys-Gly) (interchain with G-Cter in ubiquitin) cross-link. Residues 58–85 form a disordered region; sequence HSKSRTRAHAQSKREGRHSGYGKRKGTR. Residues 59–68 are compositionally biased toward basic residues; the sequence is SKSRTRAHAQ. Ser91 is subject to Phosphoserine. Glycyl lysine isopeptide (Lys-Gly) (interchain with G-Cter in ubiquitin) cross-links involve residues Lys146 and Lys186. The tract at residues 164–189 is disordered; the sequence is LKNRAARDRRAQRVAEKRDALLKEDA.

Belongs to the eukaryotic ribosomal protein eL19 family. Component of the large ribosomal subunit (LSU). Mature yeast ribosomes consist of a small (40S) and a large (60S) subunit. The 40S small subunit contains 1 molecule of ribosomal RNA (18S rRNA) and 33 different proteins (encoded by 57 genes). The large 60S subunit contains 3 rRNA molecules (25S, 5.8S and 5S rRNA) and 46 different proteins (encoded by 81 genes). eL19 lies in close proximity to the binding site for eukaryotic initiation factor eIF4G.

The protein localises to the cytoplasm. In terms of biological role, component of the ribosome, a large ribonucleoprotein complex responsible for the synthesis of proteins in the cell. The small ribosomal subunit (SSU) binds messenger RNAs (mRNAs) and translates the encoded message by selecting cognate aminoacyl-transfer RNA (tRNA) molecules. The large subunit (LSU) contains the ribosomal catalytic site termed the peptidyl transferase center (PTC), which catalyzes the formation of peptide bonds, thereby polymerizing the amino acids delivered by tRNAs into a polypeptide chain. The nascent polypeptides leave the ribosome through a tunnel in the LSU and interact with protein factors that function in enzymatic processing, targeting, and the membrane insertion of nascent chains at the exit of the ribosomal tunnel. eL19 may play a role in the last stages of translation initiation, in particular subunit joining and shedding/releasing factors. This chain is Large ribosomal subunit protein eL19A, found in Saccharomyces cerevisiae (strain ATCC 204508 / S288c) (Baker's yeast).